We begin with the raw amino-acid sequence, 65 residues long: MGMRMMFTVFLLVVLATTVVSFTSDRASDGRKAAAKDKASDLVALTVKGCCSHPACSVNNPDICG.

The N-terminal stretch at 1–21 (MGMRMMFTVFLLVVLATTVVS) is a signal peptide. The propeptide occupies 22–48 (FTSDRASDGRKAAAKDKASDLVALTVK). 2 disulfide bridges follow: Cys50–Cys56 and Cys51–Cys64. Positions 52–54 (SHP) are ser-Xaa-Pro motif, crucial for potent interaction with nAChR. Cys64 carries the cysteine amide modification.

It belongs to the conotoxin A superfamily. Expressed by the venom duct.

The protein resides in the secreted. Functionally, alpha-conotoxins act on postsynaptic membranes, they bind to the nicotinic acetylcholine receptors (nAChR) and thus inhibit them. This toxin potently and reversibly inhibits alpha-9-alpha-10/CHRNA9-CHRNA10 (IC(50)=92 nM (human) and IC(50)=8.3 nM (rat)) and human alpha3-beta-2/CHRNA3-CHRNB2 nAChR (IC(50)=218.9 nM). Also moderately inhibits human alpha-3-beta-4/CHRNA3-CHRNB4 (60% inhibition at 1 uM), rat alpha-7/CHRNA7 (65% inhibition at 1 uM) and rat alpha-3-beta-2/CHRNA3-CHRNB2 nAChR (50-70% inhibition at 10 uM). In two rat pain models, this toxin shows analgesic effect. In Conus marmoreus (Marble cone), this protein is Alpha-conotoxin Mr1.1.